A 209-amino-acid polypeptide reads, in one-letter code: Uracil phosphoribosyltransferase (209 aa).

5-phospho-alpha-D-ribose 1-diphosphate contacts are provided by residues Arg79, Arg104, and 131-139 (DPMLATGGS). Uracil contacts are provided by residues Ile194 and 199–201 (GDA). Asp200 contacts 5-phospho-alpha-D-ribose 1-diphosphate.

This sequence belongs to the UPRTase family. Requires Mg(2+) as cofactor.

The catalysed reaction is UMP + diphosphate = 5-phospho-alpha-D-ribose 1-diphosphate + uracil. It participates in pyrimidine metabolism; UMP biosynthesis via salvage pathway; UMP from uracil: step 1/1. With respect to regulation, allosterically activated by GTP. Its function is as follows. Catalyzes the conversion of uracil and 5-phospho-alpha-D-ribose 1-diphosphate (PRPP) to UMP and diphosphate. In Shouchella clausii (strain KSM-K16) (Alkalihalobacillus clausii), this protein is Uracil phosphoribosyltransferase.